The primary structure comprises 387 residues: Putative ribosomal RNA large subunit methyltransferase MJ1649 (387 aa).

Residues 5–81 (LIKLEIDRRA…EEIDYDFFYK (77 aa)) enclose the PUA domain.

The protein belongs to the methyltransferase superfamily. RlmI family.

The protein localises to the cytoplasm. The chain is Putative ribosomal RNA large subunit methyltransferase MJ1649 from Methanocaldococcus jannaschii (strain ATCC 43067 / DSM 2661 / JAL-1 / JCM 10045 / NBRC 100440) (Methanococcus jannaschii).